The chain runs to 132 residues: Transcription antitermination protein NusB (132 aa).

It belongs to the NusB family.

Its function is as follows. Involved in transcription antitermination. Required for transcription of ribosomal RNA (rRNA) genes. Binds specifically to the boxA antiterminator sequence of the ribosomal RNA (rrn) operons. This Campylobacter jejuni subsp. jejuni serotype O:6 (strain 81116 / NCTC 11828) protein is Transcription antitermination protein NusB.